The sequence spans 426 residues: Serine hydroxymethyltransferase (426 aa).

(6S)-5,6,7,8-tetrahydrofolate-binding positions include Leu122 and 126-128; that span reads GHL. At Lys231 the chain carries N6-(pyridoxal phosphate)lysine.

The protein belongs to the SHMT family. Homodimer. Requires pyridoxal 5'-phosphate as cofactor.

Its subcellular location is the cytoplasm. The catalysed reaction is (6R)-5,10-methylene-5,6,7,8-tetrahydrofolate + glycine + H2O = (6S)-5,6,7,8-tetrahydrofolate + L-serine. Its pathway is one-carbon metabolism; tetrahydrofolate interconversion. The protein operates within amino-acid biosynthesis; glycine biosynthesis; glycine from L-serine: step 1/1. Its function is as follows. Catalyzes the reversible interconversion of serine and glycine with tetrahydrofolate (THF) serving as the one-carbon carrier. This reaction serves as the major source of one-carbon groups required for the biosynthesis of purines, thymidylate, methionine, and other important biomolecules. Also exhibits THF-independent aldolase activity toward beta-hydroxyamino acids, producing glycine and aldehydes, via a retro-aldol mechanism. This chain is Serine hydroxymethyltransferase, found in Koribacter versatilis (strain Ellin345).